Reading from the N-terminus, the 172-residue chain is Translation initiation factor IF-3 (172 aa).

This sequence belongs to the IF-3 family. As to quaternary structure, monomer.

Its subcellular location is the cytoplasm. IF-3 binds to the 30S ribosomal subunit and shifts the equilibrium between 70S ribosomes and their 50S and 30S subunits in favor of the free subunits, thus enhancing the availability of 30S subunits on which protein synthesis initiation begins. The chain is Translation initiation factor IF-3 from Campylobacter jejuni subsp. jejuni serotype O:6 (strain 81116 / NCTC 11828).